Here is a 784-residue protein sequence, read N- to C-terminus: LPS-assembly protein LptD (784 aa).

Positions 1–24 are cleaved as a signal peptide; it reads MKKRIPTLLATMIATALYSQQGLA. 2 disulfides stabilise this stretch: Cys-31-Cys-724 and Cys-173-Cys-725.

Belongs to the LptD family. As to quaternary structure, component of the lipopolysaccharide transport and assembly complex. Interacts with LptE and LptA. In terms of processing, contains two intramolecular disulfide bonds.

It localises to the cell outer membrane. Its function is as follows. Together with LptE, is involved in the assembly of lipopolysaccharide (LPS) at the surface of the outer membrane. In Escherichia coli O6:K15:H31 (strain 536 / UPEC), this protein is LPS-assembly protein LptD.